The following is a 432-amino-acid chain: Probable M18 family aminopeptidase 2 (432 aa).

Zn(2+)-binding residues include H86, H157, and H408.

It belongs to the peptidase M18 family. It depends on Zn(2+) as a cofactor.

This is Probable M18 family aminopeptidase 2 from Streptomyces avermitilis (strain ATCC 31267 / DSM 46492 / JCM 5070 / NBRC 14893 / NCIMB 12804 / NRRL 8165 / MA-4680).